The sequence spans 730 residues: Ribosomal RNA large subunit methyltransferase K/L (730 aa).

The 112-residue stretch at 46–157 (TAYRLCVWSR…RGEAILSLDL (112 aa)) folds into the THUMP domain. The interval 395–418 (ERREAQPEGTEVRQQAPQASEPAR) is disordered.

The protein belongs to the methyltransferase superfamily. RlmKL family.

It localises to the cytoplasm. The enzyme catalyses guanosine(2445) in 23S rRNA + S-adenosyl-L-methionine = N(2)-methylguanosine(2445) in 23S rRNA + S-adenosyl-L-homocysteine + H(+). It carries out the reaction guanosine(2069) in 23S rRNA + S-adenosyl-L-methionine = N(2)-methylguanosine(2069) in 23S rRNA + S-adenosyl-L-homocysteine + H(+). In terms of biological role, specifically methylates the guanine in position 2445 (m2G2445) and the guanine in position 2069 (m7G2069) of 23S rRNA. In Pseudomonas putida (strain GB-1), this protein is Ribosomal RNA large subunit methyltransferase K/L.